A 110-amino-acid chain; its full sequence is Large ribosomal subunit protein uL22 (110 aa).

A compositionally biased stretch (basic residues) spans 85–95 (RGTASKIRKPT). The segment at 85–110 (RGTASKIRKPTSHVMVEVSKAQKKEA) is disordered.

The protein belongs to the universal ribosomal protein uL22 family. In terms of assembly, part of the 50S ribosomal subunit.

Functionally, this protein binds specifically to 23S rRNA; its binding is stimulated by other ribosomal proteins, e.g. L4, L17, and L20. It is important during the early stages of 50S assembly. It makes multiple contacts with different domains of the 23S rRNA in the assembled 50S subunit and ribosome. In terms of biological role, the globular domain of the protein is located near the polypeptide exit tunnel on the outside of the subunit, while an extended beta-hairpin is found that lines the wall of the exit tunnel in the center of the 70S ribosome. This Campylobacter curvus (strain 525.92) protein is Large ribosomal subunit protein uL22.